We begin with the raw amino-acid sequence, 415 residues long: Zinc finger protein ZFMSA12A (415 aa).

The interval Met1 to Pro36 is disordered. 12 C2H2-type zinc fingers span residues His78–His100, Tyr106–Cys129, Tyr134–His156, Phe161–His183, Phe189–His211, Asn217–His239, Gln245–His267, Phe273–His295, Tyr301–His323, Tyr329–His351, Tyr357–His379, and Tyr385–His407.

It is found in the nucleus. In Micropterus salmoides (Largemouth bass), this protein is Zinc finger protein ZFMSA12A.